The primary structure comprises 258 residues: Thiazole synthase (258 aa).

Lysine 100 functions as the Schiff-base intermediate with DXP in the catalytic mechanism. Residues glycine 161, 187–188 (AG), and 209–210 (NS) contribute to the 1-deoxy-D-xylulose 5-phosphate site.

It belongs to the ThiG family. As to quaternary structure, homotetramer. Forms heterodimers with either ThiH or ThiS.

It localises to the plastid. The protein resides in the chloroplast. It carries out the reaction [ThiS sulfur-carrier protein]-C-terminal-Gly-aminoethanethioate + 2-iminoacetate + 1-deoxy-D-xylulose 5-phosphate = [ThiS sulfur-carrier protein]-C-terminal Gly-Gly + 2-[(2R,5Z)-2-carboxy-4-methylthiazol-5(2H)-ylidene]ethyl phosphate + 2 H2O + H(+). Its pathway is cofactor biosynthesis; thiamine diphosphate biosynthesis. In terms of biological role, catalyzes the rearrangement of 1-deoxy-D-xylulose 5-phosphate (DXP) to produce the thiazole phosphate moiety of thiamine. Sulfur is provided by the thiocarboxylate moiety of the carrier protein ThiS. In vitro, sulfur can be provided by H(2)S. The chain is Thiazole synthase from Cyanidioschyzon merolae (strain NIES-3377 / 10D) (Unicellular red alga).